The sequence spans 285 residues: Acetyl-coenzyme A carboxylase carboxyl transferase subunit beta (285 aa).

A CoA carboxyltransferase N-terminal domain is found at 23 to 285 (VFRRCDGCSH…HLTAGRRARR (263 aa)). The Zn(2+) site is built by Cys27, Cys30, Cys46, and Cys49. The C4-type zinc-finger motif lies at 27 to 49 (CDGCSHTHDAAELARTFEVCSQC).

This sequence belongs to the AccD/PCCB family. Acetyl-CoA carboxylase is a heterohexamer composed of biotin carboxyl carrier protein (AccB), biotin carboxylase (AccC) and two subunits each of ACCase subunit alpha (AccA) and ACCase subunit beta (AccD). It depends on Zn(2+) as a cofactor.

It is found in the cytoplasm. It catalyses the reaction N(6)-carboxybiotinyl-L-lysyl-[protein] + acetyl-CoA = N(6)-biotinyl-L-lysyl-[protein] + malonyl-CoA. It participates in lipid metabolism; malonyl-CoA biosynthesis; malonyl-CoA from acetyl-CoA: step 1/1. Component of the acetyl coenzyme A carboxylase (ACC) complex. Biotin carboxylase (BC) catalyzes the carboxylation of biotin on its carrier protein (BCCP) and then the CO(2) group is transferred by the transcarboxylase to acetyl-CoA to form malonyl-CoA. The chain is Acetyl-coenzyme A carboxylase carboxyl transferase subunit beta from Sorangium cellulosum (strain So ce56) (Polyangium cellulosum (strain So ce56)).